The primary structure comprises 276 residues: CDP-diacylglycerol--serine O-phosphatidyltransferase (276 aa).

Positions M1 to I21 are disordered. 6 positions are modified to phosphoserine: S4, S34, S42, S46, S47, and S50. Transmembrane regions (helical) follow at residues M82–L102, I163–L183, Y210–V230, and Q248–S268.

The protein belongs to the CDP-alcohol phosphatidyltransferase class-I family. It depends on Mn(2+) as a cofactor. Mg(2+) serves as cofactor.

The protein resides in the microsome membrane. It localises to the endoplasmic reticulum membrane. The protein localises to the mitochondrion outer membrane. The enzyme catalyses a CDP-1,2-diacyl-sn-glycerol + L-serine = a 1,2-diacyl-sn-glycero-3-phospho-L-serine + CMP + H(+). Its pathway is phospholipid metabolism; phosphatidylethanolamine biosynthesis; phosphatidylethanolamine from CDP-diacylglycerol: step 1/2. Catalyzes the synthesis of phosphatidylserine (PtdSer). In Saccharomyces cerevisiae (strain ATCC 204508 / S288c) (Baker's yeast), this protein is CDP-diacylglycerol--serine O-phosphatidyltransferase (CHO1).